Consider the following 698-residue polypeptide: tRNA (guanine(37)-N(1))-methyltransferase (698 aa).

The segment at 233-254 (DSTAHDSVQRNEGKTPKGPLDG) is disordered. A compositionally biased stretch (basic and acidic residues) spans 234 to 247 (STAHDSVQRNEGKT). S-adenosyl-L-methionine-binding positions include Arg394, 432-433 (DI), and 459-460 (DA). Disordered stretches follow at residues 500–522 (PDQN…GHVD) and 534–582 (KKKL…DAPR). Composition is skewed to basic and acidic residues over residues 513 to 522 (RESDRVGHVD), 539 to 550 (HADTNDPLEERP), and 569 to 582 (TNND…DAPR). Residue Asn603 participates in S-adenosyl-L-methionine binding.

It belongs to the class I-like SAM-binding methyltransferase superfamily. TRM5/TYW2 family. As to quaternary structure, monomer.

Its subcellular location is the mitochondrion matrix. It localises to the nucleus. It is found in the cytoplasm. It catalyses the reaction guanosine(37) in tRNA + S-adenosyl-L-methionine = N(1)-methylguanosine(37) in tRNA + S-adenosyl-L-homocysteine + H(+). Specifically methylates the N1 position of guanosine-37 in various cytoplasmic and mitochondrial tRNAs. Methylation is not dependent on the nature of the nucleoside 5' of the target nucleoside. This is the first step in the biosynthesis of wybutosine (yW), a modified base adjacent to the anticodon of tRNAs and required for accurate decoding. In Plasmodium knowlesi (strain H), this protein is tRNA (guanine(37)-N(1))-methyltransferase.